We begin with the raw amino-acid sequence, 275 residues long: Large ribosomal subunit protein uL2 (275 aa).

2 disordered regions span residues 28-59 (KPYA…GGHK) and 224-275 (AMNP…RHKR). The segment covering 35–46 (DTQSSTAGRNNN) has biased composition (polar residues). The span at 50–59 (TTRHKGGGHK) shows a compositional bias: basic residues.

Belongs to the universal ribosomal protein uL2 family. As to quaternary structure, part of the 50S ribosomal subunit. Forms a bridge to the 30S subunit in the 70S ribosome.

In terms of biological role, one of the primary rRNA binding proteins. Required for association of the 30S and 50S subunits to form the 70S ribosome, for tRNA binding and peptide bond formation. It has been suggested to have peptidyltransferase activity; this is somewhat controversial. Makes several contacts with the 16S rRNA in the 70S ribosome. The sequence is that of Large ribosomal subunit protein uL2 from Paraburkholderia phymatum (strain DSM 17167 / CIP 108236 / LMG 21445 / STM815) (Burkholderia phymatum).